The primary structure comprises 147 residues: Sec-independent protein translocase protein TatB (147 aa).

The helical transmembrane segment at 1 to 21 (MFDFGFSELIVIAVVTLIVVG) threads the bilayer. A disordered region spans residues 117–147 (APAPMSLAPHGDAASAGREPAAVPGSGPEKA).

Belongs to the TatB family. The Tat system comprises two distinct complexes: a TatABC complex, containing multiple copies of TatA, TatB and TatC subunits, and a separate TatA complex, containing only TatA subunits. Substrates initially bind to the TatABC complex, which probably triggers association of the separate TatA complex to form the active translocon.

The protein resides in the cell inner membrane. Part of the twin-arginine translocation (Tat) system that transports large folded proteins containing a characteristic twin-arginine motif in their signal peptide across membranes. Together with TatC, TatB is part of a receptor directly interacting with Tat signal peptides. TatB may form an oligomeric binding site that transiently accommodates folded Tat precursor proteins before their translocation. The chain is Sec-independent protein translocase protein TatB from Aromatoleum aromaticum (strain DSM 19018 / LMG 30748 / EbN1) (Azoarcus sp. (strain EbN1)).